A 436-amino-acid chain; its full sequence is GTPase Der (436 aa).

EngA-type G domains lie at 4–167 (PVIA…PKIE) and 176–351 (IRFS…ESHS). GTP contacts are provided by residues 10 to 17 (GRPNVGKS), 57 to 61 (DTGGI), 119 to 122 (NKVD), 182 to 189 (GRPNVGKS), 229 to 233 (DTAGM), and 294 to 297 (NKWD). A KH-like domain is found at 352–436 (IRIQTNVLND…PIHIIARARD (85 aa)).

It belongs to the TRAFAC class TrmE-Era-EngA-EngB-Septin-like GTPase superfamily. EngA (Der) GTPase family. As to quaternary structure, associates with the 50S ribosomal subunit.

Functionally, GTPase that plays an essential role in the late steps of ribosome biogenesis. The protein is GTPase Der of Bacillus cereus (strain ATCC 10987 / NRS 248).